The sequence spans 64 residues: Toxin BmKIT3 (64 aa).

The 61-residue stretch at 1 to 61 (DGYIRGSNGC…TWKSESNTCG (61 aa)) folds into the LCN-type CS-alpha/beta domain. Cystine bridges form between Cys10/Cys60, Cys14/Cys35, Cys21/Cys42, and Cys25/Cys44. Residue Cys60 is modified to Cysteine amide.

This sequence belongs to the long (4 C-C) scorpion toxin superfamily. Sodium channel inhibitor family. Beta subfamily. As to expression, expressed by the venom gland.

It is found in the secreted. Its function is as follows. Depressant insect beta-toxins cause a transient contraction paralysis followed by a slow flaccid paralysis. They bind voltage-independently at site-4 of sodium channels (Nav) and shift the voltage of activation toward more negative potentials thereby affecting sodium channel activation and promoting spontaneous and repetitive firing. The sequence is that of Toxin BmKIT3 from Olivierus martensii (Manchurian scorpion).